The sequence spans 294 residues: 4-hydroxy-tetrahydrodipicolinate synthase (294 aa).

Residue Thr-47 coordinates pyruvate. The active-site Proton donor/acceptor is the Tyr-135. Residue Lys-163 is the Schiff-base intermediate with substrate of the active site. Ile-205 is a binding site for pyruvate.

It belongs to the DapA family. In terms of assembly, homotetramer; dimer of dimers.

It localises to the cytoplasm. It catalyses the reaction L-aspartate 4-semialdehyde + pyruvate = (2S,4S)-4-hydroxy-2,3,4,5-tetrahydrodipicolinate + H2O + H(+). It functions in the pathway amino-acid biosynthesis; L-lysine biosynthesis via DAP pathway; (S)-tetrahydrodipicolinate from L-aspartate: step 3/4. In terms of biological role, catalyzes the condensation of (S)-aspartate-beta-semialdehyde [(S)-ASA] and pyruvate to 4-hydroxy-tetrahydrodipicolinate (HTPA). The chain is 4-hydroxy-tetrahydrodipicolinate synthase from Rickettsia typhi (strain ATCC VR-144 / Wilmington).